Here is a 407-residue protein sequence, read N- to C-terminus: MKMKNFLSKSLLVLLIGLIGVKSADLSDCFSSRSTWYEAIQHGNCGYEQLTGKLGPGNLMIAAAATALYNGSFACGECYEIYGPGGTGKVMIVDQCPDPGWCDTPFPHLDLSPTAFNTTIGSTVGVAMTTVKKVSCDVTGNIKAYMKDAATTNTWFEFMVFNHRVGIASISVEDSKGTITSLPRRLYNYWTYNGNAASFPVIAHVYSIYGDQVDIYLTSSAGAQLYEGVGQFADPATTFADDCTAPFPVDTDGYIYDNGLVKPLNYNHPNLGWSDWSNGVTVNWADSSTPGADSTSKVVASGTLAYNTGIQIGTDLPVEWEGRFTALEFYIKADKDFTGLVVEYNGASKSQTPSLTTTWTKYTYDLTKDLGAPASLGKPAALKFRNNGSGSVKVYLDKIRLTPVASS.

The signal sequence occupies residues 1–23; it reads MKMKNFLSKSLLVLLIGLIGVKS. One can recognise an Expansin-like EG45 domain in the interval 42-141; it reads HGNCGYEQLT…KKVSCDVTGN (100 aa). 2 cysteine pairs are disulfide-bonded: Cys-45-Cys-75 and Cys-78-Cys-136. 3 N-linked (GlcNAc...) asparagine glycosylation sites follow: Asn-70, Asn-117, and Asn-387.

It belongs to the expansin family. Expansin A subfamily.

The protein resides in the secreted. In terms of biological role, unlikely to encode with a protein with expansin activity. This Dictyostelium discoideum (Social amoeba) protein is Expansin-like protein 2 (expl2).